The sequence spans 404 residues: Nesprin-4 (404 aa).

2 disordered regions span residues 1–91 and 277–347; these read MALS…GGKH and GQRG…GAPD. The Cytoplasmic portion of the chain corresponds to 1–355; the sequence is MALSLPLGPR…PDPASRQPLT (355 aa). Polar residues predominate over residues 39–52; it reads EESTSPEQAQTLGQ. Positions 307 to 320 are enriched in basic residues; it reads HQKRLARHQRHSLL. Residues 347-404 form the KASH domain; it reads DPASRQPLTFLLILFLLFLLLVGAMFLLPASGGPCCSHARIPRTPYLVLSYVNGLPPV. The helical; Anchor for type IV membrane protein transmembrane segment at 356–376 threads the bilayer; the sequence is FLLILFLLFLLLVGAMFLLPA. The Perinuclear space portion of the chain corresponds to 377-404; sequence SGGPCCSHARIPRTPYLVLSYVNGLPPV.

The protein belongs to the nesprin family. Core component of LINC complexes which are composed of inner nuclear membrane SUN domain-containing proteins coupled to outer nuclear membrane KASH domain-containing nesprins. SUN and KASH domain-containing proteins seem to bind each other promiscuously; however, differentially expression of LINC complex constituents can give rise to specific assemblies. Probably part of a SUN1-containing LINC complex. Interacts with kinesins KIF5B and KLC1. Post-translationally, the disulfid bond with SUN1 or SUN2 is required for stability of the respective LINC complex under tensile forces.

It is found in the nucleus outer membrane. As a component of the LINC (LInker of Nucleoskeleton and Cytoskeleton) complex, involved in the connection between the nuclear lamina and the cytoskeleton. The nucleocytoplasmic interactions established by the LINC complex play an important role in the transmission of mechanical forces across the nuclear envelope and in nuclear movement and positioning. Behaves as a kinesin cargo, providing a functional binding site for kinesin-1 at the nuclear envelope. Hence may contribute to the establishment of secretory epithelial morphology by promoting kinesin-dependent apical migration of the centrosome and Golgi apparatus and basal localization of the nucleus. The sequence is that of Nesprin-4 (SYNE4) from Homo sapiens (Human).